The chain runs to 346 residues: Small ribosomal subunit biogenesis GTPase RsgA (346 aa).

The tract at residues 1 to 26 is disordered; that stretch reads MAKRKLTQNQTRRIQSNNAKTLHRHK. The span at 7 to 20 shows a compositional bias: polar residues; the sequence is TQNQTRRIQSNNAK. One can recognise a CP-type G domain in the interval 103 to 271; sequence ENEISRPDYY…LIDSPGIREF (169 aa). Residues 159–162 and 213–221 contribute to the GTP site; these read NKVD and GQSGVGKSS. Residues C295, C300, H302, and C308 each contribute to the Zn(2+) site.

This sequence belongs to the TRAFAC class YlqF/YawG GTPase family. RsgA subfamily. In terms of assembly, monomer. Associates with 30S ribosomal subunit, binds 16S rRNA. Zn(2+) serves as cofactor.

Its subcellular location is the cytoplasm. Functionally, one of several proteins that assist in the late maturation steps of the functional core of the 30S ribosomal subunit. Helps release RbfA from mature subunits. May play a role in the assembly of ribosomal proteins into the subunit. Circularly permuted GTPase that catalyzes slow GTP hydrolysis, GTPase activity is stimulated by the 30S ribosomal subunit. This chain is Small ribosomal subunit biogenesis GTPase RsgA, found in Haemophilus influenzae (strain PittGG).